The primary structure comprises 448 residues: UDP-N-acetylmuramoylalanine--D-glutamate ligase (448 aa).

Residue 116–122 (GSNAKST) coordinates ATP.

The protein belongs to the MurCDEF family.

Its subcellular location is the cytoplasm. It catalyses the reaction UDP-N-acetyl-alpha-D-muramoyl-L-alanine + D-glutamate + ATP = UDP-N-acetyl-alpha-D-muramoyl-L-alanyl-D-glutamate + ADP + phosphate + H(+). The protein operates within cell wall biogenesis; peptidoglycan biosynthesis. Cell wall formation. Catalyzes the addition of glutamate to the nucleotide precursor UDP-N-acetylmuramoyl-L-alanine (UMA). The polypeptide is UDP-N-acetylmuramoylalanine--D-glutamate ligase (Pseudomonas savastanoi pv. phaseolicola (strain 1448A / Race 6) (Pseudomonas syringae pv. phaseolicola (strain 1448A / Race 6))).